Here is a 388-residue protein sequence, read N- to C-terminus: S-adenosylmethionine synthase (388 aa).

Residue His-16 coordinates ATP. Asp-18 lines the Mg(2+) pocket. K(+) is bound at residue Glu-44. Positions 57 and 100 each coordinate L-methionine. Residues 100 to 110 (QSPDIAQGVNE) form a flexible loop region. ATP-binding positions include 167 to 169 (DGK), 233 to 234 (RF), Asp-242, 248 to 249 (RK), and Lys-269. Asp-242 lines the L-methionine pocket. Residue Lys-273 participates in L-methionine binding.

The protein belongs to the AdoMet synthase family. As to quaternary structure, homotetramer; dimer of dimers. Requires Mg(2+) as cofactor. K(+) serves as cofactor.

It localises to the cytoplasm. It catalyses the reaction L-methionine + ATP + H2O = S-adenosyl-L-methionine + phosphate + diphosphate. It participates in amino-acid biosynthesis; S-adenosyl-L-methionine biosynthesis; S-adenosyl-L-methionine from L-methionine: step 1/1. Its function is as follows. Catalyzes the formation of S-adenosylmethionine (AdoMet) from methionine and ATP. The overall synthetic reaction is composed of two sequential steps, AdoMet formation and the subsequent tripolyphosphate hydrolysis which occurs prior to release of AdoMet from the enzyme. This chain is S-adenosylmethionine synthase, found in Desulfosudis oleivorans (strain DSM 6200 / JCM 39069 / Hxd3) (Desulfococcus oleovorans).